The primary structure comprises 1026 residues: Chromodomain-helicase-DNA-binding protein 1-like (1026 aa).

The Helicase ATP-binding domain occupies 47 to 212; sequence SLCMKNQQGC…YSLLTFIQPS (166 aa). 60-67 serves as a coordination point for ATP; the sequence is DEMGLGKT. The DEAH box signature appears at 163–166; the sequence is DEAH. In terms of domain architecture, Helicase C-terminal spans 340 to 494; the sequence is LLDSMLAYLQ…EGRFSLLDQA (155 aa). The stretch at 540–668 forms a coiled coil; the sequence is LTDEEHAKLN…EELNYKKKMA (129 aa). Residues 594–628 form a regulatory linker segment (RLS) region; the sequence is AEMEDAEKEGRALRNKAGVSLSGPLINPARKKRPL. The disordered stretch occupies residues 606–655; that stretch reads LRNKAGVSLSGPLINPARKKRPLTEAELEERRQKRQAAAAKRAKLQEERK. The segment at 608–666 is required for ATPase activity; sequence NKAGVSLSGPLINPARKKRPLTEAELEERRQKRQAAAAKRAKLQEERKKQQEELNYKKK. A Macro domain is found at 697–870; sequence HVSFSSTDSD…IFTSIYYYRR (174 aa). The segment covering 877-907 has biased composition (low complexity); sequence VSSTASTTTPSSSKPAASSPSESPHSSSPPA. Residues 877 to 929 form a disordered region; it reads VSSTASTTTPSSSKPAASSPSESPHSSSPPANREGLTKSAELSTTSHEGPGAP. The region spanning 930–1023 is the BRCT domain; it reads GLADFMRGVH…RKVSVSKYVI (94 aa).

It belongs to the SNF2/RAD54 helicase family. Interacts with nucleosomes; interacts with the acidic patch of histones.

Its subcellular location is the nucleus. It is found in the chromosome. It carries out the reaction ATP + H2O = ADP + phosphate + H(+). Adopts an inactive conformation in absence of DNA damage. Binding to poly-ADP-ribosylated histones activates the ATP-dependent chromatin remodeler activity. In terms of biological role, ATP-dependent chromatin remodeler that mediates chromatin-remodeling following DNA damage. Recruited to DNA damage sites through interaction with poly-ADP-ribose: specifically recognizes and binds histones that are poly-ADP-ribosylated on serine residues in response to DNA damage. Poly-ADP-ribose-binding activates the ATP-dependent chromatin remodeler activity, thereby regulating chromatin during DNA repair. Catalyzes nucleosome sliding away from DNA breaks in an ATP-dependent manner. This is Chromodomain-helicase-DNA-binding protein 1-like (chd1l) from Danio rerio (Zebrafish).